The following is a 364-amino-acid chain: MKGLILVGGYGTRLRPLTLSLPKPLVEFGNRPMILHQIEALANAGCTDIVLAVNYKPEVMVGALKQYEKEYGVSITFSVEEEPLGTAGPLKLAEKILKKDNTPIFVLNSDVICEYPLRDLLEFHTAHGGEATIVATKVDEPSKYGVIVHDRDVPNLIERFVEKPVEFVGNRINAGIYVLNPSVIDLIEMRPTSIEHETFPILVEQKKLYSFDLPGYWMDVGQPKDFLSGMCLYLSALTKKNSNLLTSTSEEYVNGGNVLIDPSAKIGKGCKIGPNVVIGPNCIIGDGVRIQRSTILKNSQIKDHAWVKSTIVGWNSTVGKWARLEGVTVLGEDVTVKDEVYVNGGKVLPHKSIKDNVETPQIIM.

The protein belongs to the transferase hexapeptide repeat family.

It localises to the cytoplasm. The enzyme catalyses alpha-D-mannose 1-phosphate + GTP + H(+) = GDP-alpha-D-mannose + diphosphate. Its pathway is nucleotide-sugar biosynthesis; GDP-alpha-D-mannose biosynthesis; GDP-alpha-D-mannose from alpha-D-mannose 1-phosphate (GTP route): step 1/1. Its function is as follows. Involved in cell wall synthesis where it is required for glycosylation. Involved in cell cycle progression through cell-size checkpoint. The chain is Mannose-1-phosphate guanyltransferase (MPG1) from Pichia angusta (Yeast).